Reading from the N-terminus, the 547-residue chain is Chaperonin GroEL (547 aa).

ATP-binding positions include 29–32 (TMGP), Lys-50, 86–90 (DGTTT), Gly-414, 477–479 (NAA), and Asp-493.

It belongs to the chaperonin (HSP60) family. As to quaternary structure, forms a cylinder of 14 subunits composed of two heptameric rings stacked back-to-back. Interacts with the co-chaperonin GroES.

The protein resides in the cytoplasm. It carries out the reaction ATP + H2O + a folded polypeptide = ADP + phosphate + an unfolded polypeptide.. Functionally, together with its co-chaperonin GroES, plays an essential role in assisting protein folding. The GroEL-GroES system forms a nano-cage that allows encapsulation of the non-native substrate proteins and provides a physical environment optimized to promote and accelerate protein folding. The polypeptide is Chaperonin GroEL (Campylobacter rectus (Wolinella recta)).